The following is a 127-amino-acid chain: Small ribosomal subunit protein uS12m (127 aa).

The protein belongs to the universal ribosomal protein uS12 family.

It localises to the mitochondrion. Its function is as follows. Protein S12 is involved in the translation initiation step. The polypeptide is Small ribosomal subunit protein uS12m (RPS12) (Chondrus crispus (Carrageen Irish moss)).